A 131-amino-acid polypeptide reads, in one-letter code: Large ribosomal subunit protein eL32 (131 aa).

It belongs to the eukaryotic ribosomal protein eL32 family. Component of the large ribosomal subunit (LSU). Mature N.crassa ribosomes consist of a small (40S) and a large (60S) subunit. The 40S small subunit contains 1 molecule of ribosomal RNA (18S rRNA) and at least 32 different proteins. The large 60S subunit contains 3 rRNA molecules (26S, 5.8S and 5S rRNA) and at least 42 different proteins.

It localises to the cytoplasm. Its function is as follows. Component of the ribosome, a large ribonucleoprotein complex responsible for the synthesis of proteins in the cell. The small ribosomal subunit (SSU) binds messenger RNAs (mRNAs) and translates the encoded message by selecting cognate aminoacyl-transfer RNA (tRNA) molecules. The large subunit (LSU) contains the ribosomal catalytic site termed the peptidyl transferase center (PTC), which catalyzes the formation of peptide bonds, thereby polymerizing the amino acids delivered by tRNAs into a polypeptide chain. The nascent polypeptides leave the ribosome through a tunnel in the LSU and interact with protein factors that function in enzymatic processing, targeting, and the membrane insertion of nascent chains at the exit of the ribosomal tunnel. The polypeptide is Large ribosomal subunit protein eL32 (crp-63) (Neurospora crassa (strain ATCC 24698 / 74-OR23-1A / CBS 708.71 / DSM 1257 / FGSC 987)).